A 733-amino-acid polypeptide reads, in one-letter code: Hexamerin (733 aa).

Positions 1–17 (MKTALVLILATATLAVA) are cleaved as a signal peptide. 3 N-linked (GlcNAc...) asparagine glycosylation sites follow: N199, N234, and N431.

This sequence belongs to the hemocyanin family. As to quaternary structure, homohexamer.

The protein localises to the secreted. The protein resides in the extracellular space. Its function is as follows. Larval storage protein (LSP) which may serve as a store of amino acids for synthesis of adult proteins. In Blaberus discoidalis (Tropical cockroach), this protein is Hexamerin.